The chain runs to 798 residues: Palmitoyl thioesterase CPT1C (798 aa).

Residues 1–52 (MAEAHQASSLLSSLSSDGAEVELSSPVWQEIYLCALRSWKRHLWRVWNDFLA) are Cytoplasmic-facing. Residues 53-75 (GVVPATPLSWLFLFSTIQLACLL) traverse the membrane as a helical segment. The Lumenal portion of the chain corresponds to 76 to 103 (QLDPSLGLMEKIKELLPDWGGQHHQLQG). The chain crosses the membrane as a helical span at residues 104-126 (FLSAAVFASCLWGALIFTLHVAL). At 127–798 (RLLLSHHGWL…PNTPTSSTNL (672 aa)) the chain is on the cytoplasmic side. The active-site Proton acceptor is histidine 469. Position 551-563 (551-563 (GKSFIKCCHVSSD)) interacts with CoA. 3 residues coordinate (R)-carnitine: tyrosine 585, serine 587, and threonine 598. Residues 759–798 (LFRVGQHFKRQFRGENSDYRYNFLSCKTVDPNTPTSSTNL) form a required for interaction with GRIA1 region.

Belongs to the carnitine/choline acetyltransferase family. As to quaternary structure, peripherally associated with AMPAR complex. AMPAR complex consists of an inner core made of 4 pore-forming GluA/GRIA proteins (GRIA1, GRIA2, GRIA3 and GRIA4) and 4 major auxiliary subunits arranged in a twofold symmetry. One of the two pairs of distinct binding sites is occupied either by CNIH2, CNIH3 or CACNG2, CACNG3. The other harbors CACNG2, CACNG3, CACNG4, CACNG8 or GSG1L. This inner core of AMPAR complex is complemented by outer core constituents binding directly to the GluA/GRIA proteins at sites distinct from the interaction sites of the inner core constituents. Outer core constituents include at least PRRT1, PRRT2, CKAMP44/SHISA9, FRRS1L and NRN1. The proteins of the inner and outer core serve as a platform for other, more peripherally associated AMPAR constituents, including CPT1C. Alone or in combination, these auxiliary subunits control the gating and pharmacology of the AMPAR complex and profoundly impact their biogenesis and protein processing. Interacts with SACM1L; the interaction regulates SACM1L phosphatidylinositol-3-phosphatase activity and translocation to endoplasmic reticulum/trans Golgi network in a malonyl-CoA dependent manner. Interacts with ATL1. Predominantly expressed in brain (at protein level) and testis, highly expressed in the hippocampus, amygdala and cerebellum. Expressed in neurons but not astrocytes. Expressed in the ventral horn from spinal cords.

Its subcellular location is the synapse. The protein localises to the cell projection. The protein resides in the axon. It localises to the dendrite. It is found in the dendritic spine. Its subcellular location is the endoplasmic reticulum membrane. The catalysed reaction is S-hexadecanoyl-L-cysteinyl-[protein] + H2O = L-cysteinyl-[protein] + hexadecanoate + H(+). Palmitoyl thioesterase specifically expressed in the endoplasmic reticulum of neurons. Modulates the trafficking of the glutamate receptor, AMPAR, to plasma membrane through depalmitoylation of GRIA1. Also regulates AMPR trafficking through the regulation of SACM1L phosphatidylinositol-3-phosphatase activity by interaction in a malonyl-CoA dependent manner. Binds malonyl-CoA and couples malonyl-CoA to ceramide levels, necessary for proper spine maturation and contributing to systemic energy homeostasis and appetite control. Binds to palmitoyl-CoA, but does not have carnitine palmitoyltransferase 1 catalytic activity or at very low levels. This is Palmitoyl thioesterase CPT1C (Cpt1c) from Mus musculus (Mouse).